We begin with the raw amino-acid sequence, 293 residues long: DDRGK domain-containing protein 1 (293 aa).

Residues 1–6 (MWGPLI) lie on the Lumenal side of the membrane. Residues 7-27 (YALLGLAIVAAAFLFVRRSQA) traverse the membrane as a helical segment. The Cytoplasmic portion of the chain corresponds to 28 to 293 (KEVVPVADDD…PADVDETTTA (266 aa)). Disordered regions lie at residues 30–151 (VVPV…RQKE) and 273–293 (TDVE…TTTA). Basic and acidic residues-rich tracts occupy residues 90–126 (KLQE…KERE) and 133–151 (ERQR…RQKE).

The protein belongs to the DDRGK1 family.

The protein localises to the endoplasmic reticulum membrane. Substrate adapter for ufmylation, the covalent attachment of the ubiquitin-like modifier UFM1 to substrate proteins. The chain is DDRGK domain-containing protein 1 from Monosiga brevicollis (Choanoflagellate).